Consider the following 277-residue polypeptide: 2,5-diketo-D-gluconic acid reductase B (277 aa).

Residue tyrosine 51 is the Proton donor of the active site. Histidine 109 contacts substrate. NADP(+) is bound at residue 189–242; it reads SPLARRSELLTEQLLQELAVVYGVTPTQVVLRWHVQLGSTPIPKSADPDRQREN.

Belongs to the aldo/keto reductase family.

The protein localises to the cytoplasm. The enzyme catalyses 2-dehydro-D-gluconate + NADP(+) = 2,5-didehydro-D-gluconate + NADPH + H(+). Catalyzes the reduction of 2,5-diketo-D-gluconic acid (25DKG) to 2-keto-L-gulonic acid (2KLG). 25DKGR-B has higher catalytic efficiency than 25DKGR-A. This Corynebacterium sp. (strain SHS752001) protein is 2,5-diketo-D-gluconic acid reductase B (dkgB).